Reading from the N-terminus, the 1112-residue chain is Carbamoyl phosphate synthase large chain (1112 aa).

The segment at 1–407 (MPRRTDLRHV…ALGKVMRSLE (407 aa)) is carboxyphosphate synthetic domain. Residues arginine 134, arginine 174, glycine 180, glycine 181, glutamate 213, isoleucine 215, glutamate 220, glycine 246, valine 247, histidine 248, glutamine 290, and glutamate 304 each coordinate ATP. The 196-residue stretch at 138–333 (KDIVTKVGGE…IAKIAAKLAI (196 aa)) folds into the ATP-grasp 1 domain. 3 residues coordinate Mg(2+): glutamine 290, glutamate 304, and asparagine 306. Mn(2+) is bound by residues glutamine 290, glutamate 304, and asparagine 306. The oligomerization domain stretch occupies residues 408–559 (TGRAGFWTAP…ELDPAAESEV (152 aa)). Residues 560–965 (APQAERPKVL…AFAKSQTAAY (406 aa)) form a carbamoyl phosphate synthetic domain region. An ATP-grasp 2 domain is found at 693-884 (GEVLRTAGLP…LAKACARIML (192 aa)). ATP contacts are provided by arginine 729, arginine 768, leucine 770, glutamate 775, glycine 800, isoleucine 801, histidine 802, serine 803, glutamine 843, and glutamate 855. 3 residues coordinate Mg(2+): glutamine 843, glutamate 855, and asparagine 857. Mn(2+) contacts are provided by glutamine 843, glutamate 855, and asparagine 857. One can recognise an MGS-like domain in the interval 966–1112 (GSLPSEGTVF…LQELHSELGN (147 aa)). The interval 966-1112 (GSLPSEGTVF…LQELHSELGN (147 aa)) is allosteric domain.

This sequence belongs to the CarB family. Composed of two chains; the small (or glutamine) chain promotes the hydrolysis of glutamine to ammonia, which is used by the large (or ammonia) chain to synthesize carbamoyl phosphate. Tetramer of heterodimers (alpha,beta)4. It depends on Mg(2+) as a cofactor. Requires Mn(2+) as cofactor.

It catalyses the reaction hydrogencarbonate + L-glutamine + 2 ATP + H2O = carbamoyl phosphate + L-glutamate + 2 ADP + phosphate + 2 H(+). The enzyme catalyses hydrogencarbonate + NH4(+) + 2 ATP = carbamoyl phosphate + 2 ADP + phosphate + 2 H(+). The protein operates within amino-acid biosynthesis; L-arginine biosynthesis; carbamoyl phosphate from bicarbonate: step 1/1. Its pathway is pyrimidine metabolism; UMP biosynthesis via de novo pathway; (S)-dihydroorotate from bicarbonate: step 1/3. Large subunit of the glutamine-dependent carbamoyl phosphate synthetase (CPSase). CPSase catalyzes the formation of carbamoyl phosphate from the ammonia moiety of glutamine, carbonate, and phosphate donated by ATP, constituting the first step of 2 biosynthetic pathways, one leading to arginine and/or urea and the other to pyrimidine nucleotides. The large subunit (synthetase) binds the substrates ammonia (free or transferred from glutamine from the small subunit), hydrogencarbonate and ATP and carries out an ATP-coupled ligase reaction, activating hydrogencarbonate by forming carboxy phosphate which reacts with ammonia to form carbamoyl phosphate. This is Carbamoyl phosphate synthase large chain from Mycobacterium sp. (strain JLS).